The chain runs to 162 residues: MTSIVRTLRSLTLWELVSGMALTFRYMLKPKVTINYPFEKGYLSPRFRGEHALRRYANGEERCIACKLCEAICPAQAITIEAEPRTDGSRRTTRYDIDMTKCIYCGFCEEACPVDAIVEGPNFEFAAETREELLYNKAKLLANGDRWEPELALRLRKDAAYR.

4Fe-4S ferredoxin-type domains are found at residues 53-83 (LRRYANGEERCIACKLCEAICPAQAITIEAE) and 93-122 (TRYDIDMTKCIYCGFCEEACPVDAIVEGPN). The [4Fe-4S] cluster site is built by cysteine 63, cysteine 66, cysteine 69, cysteine 73, cysteine 102, cysteine 105, cysteine 108, and cysteine 112.

The protein belongs to the complex I 23 kDa subunit family. In terms of assembly, NDH-1 is composed of 14 different subunits. Subunits NuoA, H, J, K, L, M, N constitute the membrane sector of the complex. [4Fe-4S] cluster serves as cofactor.

The protein localises to the cell inner membrane. The catalysed reaction is a quinone + NADH + 5 H(+)(in) = a quinol + NAD(+) + 4 H(+)(out). Functionally, NDH-1 shuttles electrons from NADH, via FMN and iron-sulfur (Fe-S) centers, to quinones in the respiratory chain. The immediate electron acceptor for the enzyme in this species is believed to be ubiquinone. Couples the redox reaction to proton translocation (for every two electrons transferred, four hydrogen ions are translocated across the cytoplasmic membrane), and thus conserves the redox energy in a proton gradient. This chain is NADH-quinone oxidoreductase subunit I, found in Rhodospirillum rubrum (strain ATCC 11170 / ATH 1.1.1 / DSM 467 / LMG 4362 / NCIMB 8255 / S1).